The sequence spans 25 residues: ATP synthase subunit alpha, mitochondrial (25 aa).

It belongs to the ATPase alpha/beta chains family. As to quaternary structure, F-type ATPases have 2 components, CF(1) - the catalytic core - and CF(0) - the membrane proton channel. CF(1) has five subunits: alpha(3), beta(3), gamma(1), delta(1), epsilon(1). CF(0) has three main subunits: a, b and c.

It is found in the mitochondrion. Its subcellular location is the mitochondrion inner membrane. Its function is as follows. Mitochondrial membrane ATP synthase (F(1)F(0) ATP synthase or Complex V) produces ATP from ADP in the presence of a proton gradient across the membrane which is generated by electron transport complexes of the respiratory chain. F-type ATPases consist of two structural domains, F(1) - containing the extramembraneous catalytic core, and F(0) - containing the membrane proton channel, linked together by a central stalk and a peripheral stalk. During catalysis, ATP synthesis in the catalytic domain of F(1) is coupled via a rotary mechanism of the central stalk subunits to proton translocation. Subunits alpha and beta form the catalytic core in F(1). Rotation of the central stalk against the surrounding alpha(3)beta(3) subunits leads to hydrolysis of ATP in three separate catalytic sites on the beta subunits. Subunit alpha does not bear the catalytic high-affinity ATP-binding sites. This is ATP synthase subunit alpha, mitochondrial (ATPA) from Spinacia oleracea (Spinach).